The chain runs to 435 residues: Xylose isomerase (435 aa).

Residues H100 and D103 contribute to the active site. Mg(2+) contacts are provided by E231, E267, H270, D295, D306, D308, and D338.

It belongs to the xylose isomerase family. Homotetramer. Mg(2+) serves as cofactor.

It localises to the cytoplasm. The enzyme catalyses alpha-D-xylose = alpha-D-xylulofuranose. In Brucella suis (strain ATCC 23445 / NCTC 10510), this protein is Xylose isomerase.